The sequence spans 164 residues: Lipoprotein signal peptidase (164 aa).

4 helical membrane passes run 11 to 31 (YWVLALAAIVLDQWSKWAVLS), 41 to 61 (VIPSFFDLTLVYNPGAAFSFL), 64 to 84 (QGGWQKYFFLVLAVAVSAYLV), and 92 to 112 (FATLGKTGAAMIIGGALGNVI). Residues Asp-122 and Asp-140 contribute to the active site. The helical transmembrane segment at 132–152 (FYPAFNIADSFICVGAVLAVL) threads the bilayer.

The protein belongs to the peptidase A8 family.

The protein resides in the cell inner membrane. It catalyses the reaction Release of signal peptides from bacterial membrane prolipoproteins. Hydrolyzes -Xaa-Yaa-Zaa-|-(S,diacylglyceryl)Cys-, in which Xaa is hydrophobic (preferably Leu), and Yaa (Ala or Ser) and Zaa (Gly or Ala) have small, neutral side chains.. It functions in the pathway protein modification; lipoprotein biosynthesis (signal peptide cleavage). Functionally, this protein specifically catalyzes the removal of signal peptides from prolipoproteins. This chain is Lipoprotein signal peptidase, found in Neisseria meningitidis serogroup C (strain 053442).